The following is a 658-amino-acid chain: Interferon-induced GTP-binding protein Mx1 (658 aa).

Met1 is subject to N-acetylmethionine. A disordered region spans residues 1 to 20 (MVNSKGKITDSDPGSSHLLL). One can recognise a Dynamin-type G domain in the interval 65 to 338 (DLALPAIAVI…LITHICKTLP (274 aa)). The segment at 75–82 (GDQSSGKS) is G1 motif. 75 to 82 (GDQSSGKS) is a GTP binding site. The tract at residues 100–102 (VTR) is G2 motif. The G3 motif stretch occupies residues 176–179 (DLPG). Residues 176 to 180 (DLPGI) and 245 to 248 (TKPD) contribute to the GTP site. Positions 245–248 (TKPD) are G4 motif. The segment at 277–280 (KCRG) is G5 motif. A bundle signaling element (BSE) region spans residues 339–364 (LLEKQIKENYEKITEELQKYGSDVPE). The interval 364 to 531 (EEEHEKMFFL…HFQMEQIVYC (168 aa)) is middle domain. The interval 365-628 (EEHEKMFFLI…KDTHNWLLKE (264 aa)) is stalk. Positions 551–554 (KDKK) are critical for lipid-binding. The GED domain maps to 570-658 (LSDIFEHLLA…ARRRLAKFPG (89 aa)).

This sequence belongs to the TRAFAC class dynamin-like GTPase superfamily. Dynamin/Fzo/YdjA family. As to quaternary structure, homooligomer. Oligomerizes into multimeric filamentous or ring-like structures by virtue of its stalk domain. Oligomerization is critical for GTPase activity, protein stability, and recognition of viral target structures. Interacts with TRPC1, TRPC3, TRPC4, TRPC5, TRPC6 and TRPC7. Interacts with HSPA5. Interacts with TUBB/TUBB5. Interacts with DDX39A and DDX39B. In terms of processing, ISGylated.

The protein localises to the cytoplasm. The protein resides in the endoplasmic reticulum membrane. Its subcellular location is the perinuclear region. Interferon-induced dynamin-like GTPase with antiviral activity. This is Interferon-induced GTP-binding protein Mx1 (MX1) from Otaria byronia (South American sea lion).